Reading from the N-terminus, the 177-residue chain is Large ribosomal subunit protein uL6 (177 aa).

Belongs to the universal ribosomal protein uL6 family. Part of the 50S ribosomal subunit.

This protein binds to the 23S rRNA, and is important in its secondary structure. It is located near the subunit interface in the base of the L7/L12 stalk, and near the tRNA binding site of the peptidyltransferase center. The polypeptide is Large ribosomal subunit protein uL6 (Colwellia psychrerythraea (strain 34H / ATCC BAA-681) (Vibrio psychroerythus)).